The following is a 551-amino-acid chain: Meiotically up-regulated gene 184 protein (551 aa).

The J domain maps to 12-78; the sequence is DYYAILKLQK…TKRLIYDQLF (67 aa). Positions 85 to 122 are enriched in polar residues; it reads RSQYKPNSTSNPSKHTSAYASYNKGKNSKWSSPFASTT. 3 disordered regions span residues 85–153, 176–226, and 334–359; these read RSQY…FPRD, RQEP…SVYK, and EAES…TRNN. Over residues 124–133 the composition is skewed to basic and acidic residues; it reads KPQESSEKYS. The span at 134 to 146 shows a compositional bias: basic residues; sequence KKSSTRKKEHFNK. 2 stretches are compositionally biased toward basic and acidic residues: residues 176-187 and 203-219; these read RQEPESLKKENN and GPKD…KIPE.

Its subcellular location is the cytoplasm. The protein localises to the cytoskeleton. Functionally, has a role in sporulation. The protein is Meiotically up-regulated gene 184 protein (mug184) of Schizosaccharomyces pombe (strain 972 / ATCC 24843) (Fission yeast).